The primary structure comprises 830 residues: MSKMAVLFLAVFLMNSVLMIYCDPDHYIRAGYNHKYPFRICSIAKGTDLMRFDRDISCSPYKSNAKMSEGFFIIYKTNIETYTFPVRTYKKELTFQSSYRDVGVVYFLDRTVMGLAMPVYEANLVNSHAQCYSAVAMKRPDGTVFSAFHEDNNKNNTLNLFPLNFKSITNKRFITTKEPYFARGPLWLYSTSTSLNCIVTEATAKAKYPFSYFALTTGEIVEGSPFFNGSNGKHFAEPLEKLTILENYTMIEDLMNGMNGATTLVRKIAFLEKADTLFSWEIKEENESVCMLKHWTTVTHGLRAETNETYHFISKELTAAFVAPKESLNLTDPKQTCIKNEFEKIINEVYMSDYNDTYSMNGSYQIFKTTGDLILIWQPLVQKSLMFLEQGSEKIRRRRDVGDVKSRHDILYVQLQYLYDTLKDYINDALGNLAESWCLDQKRTITMLHELSKISPSSIVSEVYGRPISAQLHGDVLAISKCIEVNQSSVQLHKSMRVVDAKGVRSETMCYNRPLVTFSFVNSTPEVVPGQLGLDNEILLGDHRTEECEIPSTKIFLSGNHAHVYTDYTHTNSTPIEDIEVLDAFIRLKIDPLENADFKVLDLYSPDELSRANVFDLENILREYNSYKSALYTIEAKIATNTPSYVNGINSFLQGLGAIGTGLGSVISVTAGALGDIVGGVVSFLKNPFGGGLMLILAIVVVVIIIVVFVRQRHVLSKPIDMMFPYATNPVTTVSSVTGTTVVKTPSVKDVDGGTSVAVSEKEEGMADVSGQVSDDEYSQEDALKMLKAIKSLDESYRRKPSSSESHASKPSLIDRIRYRGYKSVNVEEA.

An N-terminal signal peptide occupies residues 1 to 22 (MSKMAVLFLAVFLMNSVLMIYC). Over 23–688 (DPDHYIRAGY…GGVVSFLKNP (666 aa)) the chain is Virion surface. 4 cysteine pairs are disulfide-bonded: Cys41–Cys482, Cys58–Cys438, Cys131–Cys197, and Cys290–Cys337. The segment at 98 to 104 (SYRDVGV) is involved in fusion and/or binding to host membrane. Residue Asn155 is glycosylated (N-linked (GlcNAc...) asparagine; by host). The segment at 184–191 (GPLWLYST) is involved in fusion and/or binding to host membrane. Residues Asn228, Asn247, Asn286, Asn307, Asn329, Asn355, Asn361, and Asn486 are each glycosylated (N-linked (GlcNAc...) asparagine; by host). Residues Cys510 and Cys548 are joined by a disulfide bond. 2 hydrophobic membrane proximal region regions span residues 634 to 686 (IEAK…SFLK) and 644 to 685 (SYVN…VSFL). A helical membrane pass occupies residues 689-709 (FGGGLMLILAIVVVVIIIVVF). Residues 710 to 830 (VRQRHVLSKP…GYKSVNVEEA (121 aa)) lie on the Intravirion side of the membrane. Residues 822 to 825 (YKSV) carry the Internalization motif motif.

The protein belongs to the herpesviridae glycoprotein B family. Homotrimer; disulfide-linked. Binds to heparan sulfate proteoglycans. Interacts with gH/gL heterodimer. A proteolytic cleavage by host furin generates two subunits that remain linked by disulfide bonds.

It localises to the virion membrane. The protein localises to the host cell membrane. It is found in the host endosome membrane. Its subcellular location is the host Golgi apparatus membrane. Functionally, envelope glycoprotein that forms spikes at the surface of virion envelope. Essential for the initial attachment to heparan sulfate moieties of the host cell surface proteoglycans. Involved in fusion of viral and cellular membranes leading to virus entry into the host cell. Following initial binding to its host receptors, membrane fusion is mediated by the fusion machinery composed at least of gB and the heterodimer gH/gL. May be involved in the fusion between the virion envelope and the outer nuclear membrane during virion egress. The sequence is that of Envelope glycoprotein B from Human herpesvirus 6A (strain Uganda-1102) (HHV-6 variant A).